The primary structure comprises 326 residues: L-lactate dehydrogenase (326 aa).

NAD(+)-binding positions include valine 26, aspartate 47, lysine 52, tyrosine 78, and 92–93; that span reads GA. Positions 95 and 101 each coordinate substrate. Residues threonine 114, 131–133, and serine 156 contribute to the NAD(+) site; that span reads ASN. Residue 133–136 coordinates substrate; the sequence is NPVD. 161-164 serves as a coordination point for substrate; the sequence is DTAR. Arginine 166 and histidine 181 together coordinate beta-D-fructose 1,6-bisphosphate. The Proton acceptor role is filled by histidine 188. Tyrosine 233 carries the phosphotyrosine modification. Residue threonine 242 coordinates substrate.

Belongs to the LDH/MDH superfamily. LDH family. As to quaternary structure, homotetramer.

The protein localises to the cytoplasm. It catalyses the reaction (S)-lactate + NAD(+) = pyruvate + NADH + H(+). It functions in the pathway fermentation; pyruvate fermentation to lactate; (S)-lactate from pyruvate: step 1/1. Allosterically activated by fructose 1,6-bisphosphate (FBP). Catalyzes the conversion of lactate to pyruvate. This chain is L-lactate dehydrogenase, found in Corynebacterium jeikeium (strain K411).